The sequence spans 833 residues: Major vault protein (833 aa).

MVP repeat units lie at residues 54-118 (RHYC…QLIP), 119-170 (PNTG…TVIY), 171-223 (PNTA…TMLS), 224-278 (DLKA…VSLS), 280-328 (KEYV…LVVG), 329-380 (KEEA…MALD), and 381-433 (KNEG…SIQT).

In terms of assembly, the vault ribonucleoprotein particle is a huge (400 A x 670 A) cage structure of 12.9 MDa. It consists of a dimer of half-vaults, with each half-vault comprising 39 identical major vault protein (MVP) chains, PARP4 and one or more vault RNAs (vRNAs).

Its subcellular location is the cytoplasm. It is found in the nucleus. Functionally, required for normal vault structure. Vaults are multi-subunit structures that may act as scaffolds for proteins involved in signal transduction. Vaults may also play a role in nucleo-cytoplasmic transport. This Leishmania infantum protein is Major vault protein.